Consider the following 613-residue polypeptide: Probable LRR receptor-like serine/threonine-protein kinase At5g10290 (613 aa).

The signal sequence occupies residues 1–31 (MRMFSLQKMAMAFTLLFFACLCSFVSPDAQG). Topologically, residues 32–225 (DALFALRISL…SGDSSKPKTG (194 aa)) are extracellular. Residues N81 and N116 are each glycosylated (N-linked (GlcNAc...) asparagine). LRR repeat units lie at residues 95–117 (NLKT…FGNL), 119–141 (SLTS…IGNL), 143–166 (KLQF…TGLP), and 167–189 (NLLN…LFEI). N155 carries N-linked (GlcNAc...) asparagine glycosylation. A glycan (N-linked (GlcNAc...) asparagine) is linked at N193. The helical transmembrane segment at 226 to 246 (IIAGVVAGVTVVLFGILLFLF) threads the bilayer. Residues 247 to 613 (CKDRHKGYRR…QDAIELSGGR (367 aa)) lie on the Cytoplasmic side of the membrane. T287 carries the phosphothreonine modification. One can recognise a Protein kinase domain in the interval 290 to 569 (FSEKNVLGQG…VVRMLEGEGL (280 aa)). Residue 296–304 (LGQGGFGKV) coordinates ATP. T313 is subject to Phosphothreonine. Position 318 (K318) interacts with ATP. S371 bears the Phosphoserine mark. T390 bears the Phosphothreonine mark. Catalysis depends on D417, which acts as the Proton acceptor. Phosphothreonine is present on residues T450, T451, and T456. Y464 is modified (phosphotyrosine). Phosphoserine is present on S466. A Phosphothreonine modification is found at T467. S471 is modified (phosphoserine). T547 carries the post-translational modification Phosphothreonine.

It belongs to the protein kinase superfamily. Ser/Thr protein kinase family.

The protein resides in the cell membrane. It carries out the reaction L-seryl-[protein] + ATP = O-phospho-L-seryl-[protein] + ADP + H(+). The catalysed reaction is L-threonyl-[protein] + ATP = O-phospho-L-threonyl-[protein] + ADP + H(+). The protein is Probable LRR receptor-like serine/threonine-protein kinase At5g10290 of Arabidopsis thaliana (Mouse-ear cress).